The chain runs to 322 residues: GDSL esterase/lipase At2g04020 (322 aa).

An N-terminal signal peptide occupies residues 1 to 26; the sequence is MGLPSSLESYLLLILLSFLNVSTIYS. Ser50 functions as the Nucleophile in the catalytic mechanism. Asn260 carries an N-linked (GlcNAc...) asparagine glycan. Catalysis depends on residues Asp296 and His299.

The protein belongs to the 'GDSL' lipolytic enzyme family.

Its subcellular location is the secreted. This chain is GDSL esterase/lipase At2g04020, found in Arabidopsis thaliana (Mouse-ear cress).